The chain runs to 239 residues: tRNA (guanine-N(1)-)-methyltransferase (239 aa).

S-adenosyl-L-methionine is bound by residues G110 and 130–135 (VGDYVL).

The protein belongs to the RNA methyltransferase TrmD family. As to quaternary structure, homodimer.

It localises to the cytoplasm. It carries out the reaction guanosine(37) in tRNA + S-adenosyl-L-methionine = N(1)-methylguanosine(37) in tRNA + S-adenosyl-L-homocysteine + H(+). Its function is as follows. Specifically methylates guanosine-37 in various tRNAs. The polypeptide is tRNA (guanine-N(1)-)-methyltransferase (Borrelia turicatae (strain 91E135)).